A 159-amino-acid chain; its full sequence is Small ribosomal subunit protein uS9 (159 aa).

The protein belongs to the universal ribosomal protein uS9 family.

The chain is Small ribosomal subunit protein uS9 from Rickettsia peacockii (strain Rustic).